The following is a 330-amino-acid chain: ATP-dependent (S)-NAD(P)H-hydrate dehydratase (330 aa).

Positions 36 to 327 constitute a YjeF C-terminal domain; it reads VIPLVRNTIP…QEINSAFKKL (292 aa). Residues glycine 136 and 189 to 195 contribute to the (6S)-NADPHX site; that span reads NFMEFTR. Residues 229 to 233 and 248 to 257 each bind ATP; these read KGEED and GSGRRCGGQG. Residue aspartate 258 participates in (6S)-NADPHX binding.

Belongs to the NnrD/CARKD family. Mg(2+) is required as a cofactor.

It carries out the reaction (6S)-NADHX + ATP = ADP + phosphate + NADH + H(+). It catalyses the reaction (6S)-NADPHX + ATP = ADP + phosphate + NADPH + H(+). In terms of biological role, catalyzes the dehydration of the S-form of NAD(P)HX at the expense of ATP, which is converted to ADP. Together with NAD(P)HX epimerase, which catalyzes the epimerization of the S- and R-forms, the enzyme allows the repair of both epimers of NAD(P)HX, a damaged form of NAD(P)H that is a result of enzymatic or heat-dependent hydration. The protein is ATP-dependent (S)-NAD(P)H-hydrate dehydratase of Danio rerio (Zebrafish).